The chain runs to 262 residues: Lectin (262 aa).

A signal peptide spans 1–21 (MASSVLLVLSLFLVLLLTQAS). 5 N-linked (GlcNAc...) asparagine glycosylation sites follow: asparagine 53, asparagine 82, asparagine 100, asparagine 129, and asparagine 205.

Belongs to the leguminous lectin family.

Functionally, this metalloglycoprotein, containing Ca(2+), Mn(2+), binds glycoconjugates containing terminal non-reducing alpha-D-GalNAc residues. This Phaseolus lunatus (Lima bean) protein is Lectin.